An 89-amino-acid polypeptide reads, in one-letter code: Small ribosomal subunit protein uS14A (89 aa).

This sequence belongs to the universal ribosomal protein uS14 family. Part of the 30S ribosomal subunit. Contacts proteins S3 and S10.

Binds 16S rRNA, required for the assembly of 30S particles and may also be responsible for determining the conformation of the 16S rRNA at the A site. This is Small ribosomal subunit protein uS14A from Listeria welshimeri serovar 6b (strain ATCC 35897 / DSM 20650 / CCUG 15529 / CIP 8149 / NCTC 11857 / SLCC 5334 / V8).